A 436-amino-acid polypeptide reads, in one-letter code: Phosphatidylinositol transfer protein CSR1 (436 aa).

A disordered region spans residues 85-104 (VYDAEKVEDSDAEKEKPTPQ). A compositionally biased stretch (basic and acidic residues) spans 86-102 (YDAEKVEDSDAEKEKPT). The CRAL-TRIO domain maps to 188–347 (KKGIVKQLEL…ELGGKDEYNF (160 aa)).

The protein belongs to the PITP family. In terms of assembly, binds phosphatidylinositol (PtdIns).

It localises to the cytoplasm. The protein localises to the endosome. Its function is as follows. Non-classical phosphatidylinositol (PtdIns) transfer protein (PITP), which exhibits PtdIns-binding/transfer activity in the absence of detectable PtdCho-binding/transfer activity. May also regulate post-Golgi membrane-trafficking events and have a role resistance to oxidative stress. The protein is Phosphatidylinositol transfer protein CSR1 (CSR1) of Eremothecium gossypii (strain ATCC 10895 / CBS 109.51 / FGSC 9923 / NRRL Y-1056) (Yeast).